The primary structure comprises 117 residues: Small ribosomal subunit protein uS17 (117 aa).

Residues 1–42 (MMAEAKKAAPKKAATAASKDADAKGPKHTPPNPKVRGRRKTR) are disordered.

This sequence belongs to the universal ribosomal protein uS17 family. In terms of assembly, part of the 30S ribosomal subunit.

Functionally, one of the primary rRNA binding proteins, it binds specifically to the 5'-end of 16S ribosomal RNA. The protein is Small ribosomal subunit protein uS17 of Mycolicibacterium paratuberculosis (strain ATCC BAA-968 / K-10) (Mycobacterium paratuberculosis).